A 137-amino-acid polypeptide reads, in one-letter code: Large ribosomal subunit protein uL16c (137 aa).

The protein belongs to the universal ribosomal protein uL16 family. Part of the 50S ribosomal subunit.

The protein localises to the plastid. The chain is Large ribosomal subunit protein uL16c (rpl16) from Helicosporidium sp. subsp. Simulium jonesii (Green alga).